The primary structure comprises 295 residues: Protease HtpX (295 aa).

2 consecutive transmembrane segments (helical) span residues 4 to 24 (ILLF…TLSL) and 41 to 61 (SQLL…SLFI). His-147 is a binding site for Zn(2+). The active site involves Glu-148. His-151 lines the Zn(2+) pocket. Transmembrane regions (helical) follow at residues 158–178 (VTLA…ARII) and 199–219 (IATI…VMWF). Residue Glu-224 coordinates Zn(2+).

It belongs to the peptidase M48B family. Zn(2+) serves as cofactor.

The protein localises to the cell inner membrane. This Pseudomonas fluorescens (strain Pf0-1) protein is Protease HtpX.